The following is a 702-amino-acid chain: Elongation factor G (702 aa).

The region spanning 8-290 is the tr-type G domain; sequence HRVRNIGIAA…AVAMYLPAPT (283 aa). GTP-binding positions include 17–24, 87–91, and 141–144; these read AHIDAGKT, DTPGH, and NKMD.

This sequence belongs to the TRAFAC class translation factor GTPase superfamily. Classic translation factor GTPase family. EF-G/EF-2 subfamily.

It localises to the cytoplasm. In terms of biological role, catalyzes the GTP-dependent ribosomal translocation step during translation elongation. During this step, the ribosome changes from the pre-translocational (PRE) to the post-translocational (POST) state as the newly formed A-site-bound peptidyl-tRNA and P-site-bound deacylated tRNA move to the P and E sites, respectively. Catalyzes the coordinated movement of the two tRNA molecules, the mRNA and conformational changes in the ribosome. This Aliarcobacter butzleri (strain RM4018) (Arcobacter butzleri) protein is Elongation factor G.